The sequence spans 205 residues: uncharacterized protein (205 aa).

This is an uncharacterized protein from Caenorhabditis elegans.